The chain runs to 187 residues: Insulin-like growth factor 2 (187 aa).

Positions 1 to 23 are cleaved as a signal peptide; the sequence is MCAARQILLLLLAFLAYALDSAA. The interval 25–51 is b; it reads YGTAETLCGGELVDTLQFVCGDRGFYF. 3 cysteine pairs are disulfide-bonded: Cys-32/Cys-71, Cys-44/Cys-84, and Cys-70/Cys-75. Residues 52 to 64 form a c region; sequence SRPVGRNNRRINR. Positions 64 to 85 are a; the sequence is RGIVEECCFRSCDLALLETYCA. A d region spans residues 86-91; it reads KSVKSE. A propeptide spans 92–187 (e peptide); that stretch reads RDLSATSLAG…ASPEATGPQE (96 aa). The tract at residues 162–187 is disordered; that stretch reads HRPLISLPSQRPPAPRASPEATGPQE.

It belongs to the insulin family.

It localises to the secreted. The insulin-like growth factors, isolated from plasma, are structurally and functionally related to insulin but have a much higher growth-promoting activity. Acts as a ligand for integrin which is required for IGF2 signaling. The sequence is that of Insulin-like growth factor 2 from Gallus gallus (Chicken).